We begin with the raw amino-acid sequence, 117 residues long: Ig heavy chain V region 1-72 (117 aa).

An N-terminal signal peptide occupies residues 1-19 (MGWSCIMLFLAATATGVHS). Residues 20–49 (QVQLQQPGAELVKPGASVKLSCKASGYTFT) form a framework-1 region. Cysteines 41 and 115 form a disulfide. The interval 50-54 (SYWMH) is complementarity-determining-1. The framework-2 stretch occupies residues 55–68 (WVKQRPGRGLEWIG). The interval 69–85 (RIDPNSGGTKYNEKFKS) is complementarity-determining-2. A framework-3 region spans residues 86–117 (KATLTVDKPSSTAYMQLSSLTSEDSAVYYCAR).

The protein is Ig heavy chain V region 1-72 of Mus musculus (Mouse).